A 394-amino-acid chain; its full sequence is Na(+)/H(+) antiporter NhaA (394 aa).

A run of 11 helical transmembrane segments spans residues 14-34, 59-79, 95-115, 125-145, 154-174, 179-199, 213-233, 254-274, 292-312, 328-348, and 363-383; these read AGGLILIIAAAIALLMANSAL, LLLWINDGLMAVFFLMIGLEV, VFPAIAALGGMLAPALIYLLF, GWAIPAATDIAFALGVMALLG, VFLLALAIIDDLGVIIIIALF, VSLQSLGIAAAAIALLAYMNW, LVLWVCILKSGVHATLAGVIV, GLHPWVAYLILPLFAFANAGV, IATGLFIGKPLGIFTFSWLAV, IFAVSVLCGIGFTMSIFIASL, and LGILLGSTTAAVVGYSLLRLV.

It belongs to the NhaA Na(+)/H(+) (TC 2.A.33) antiporter family.

The protein localises to the cell inner membrane. The catalysed reaction is Na(+)(in) + 2 H(+)(out) = Na(+)(out) + 2 H(+)(in). Na(+)/H(+) antiporter that extrudes sodium in exchange for external protons. The polypeptide is Na(+)/H(+) antiporter NhaA (Yersinia pestis bv. Antiqua (strain Antiqua)).